A 590-amino-acid chain; its full sequence is Aspartate--tRNA(Asp/Asn) ligase (590 aa).

Residue Glu175 participates in L-aspartate binding. Positions 199–202 (QQYK) are aspartate. 2 residues coordinate L-aspartate: Arg221 and His450. 221-223 (RDE) contacts ATP. Glu484 provides a ligand contact to ATP. Position 491 (Arg491) interacts with L-aspartate. Residue 536–539 (GVDR) participates in ATP binding.

Belongs to the class-II aminoacyl-tRNA synthetase family. Type 1 subfamily. As to quaternary structure, homodimer.

The protein localises to the cytoplasm. It carries out the reaction tRNA(Asx) + L-aspartate + ATP = L-aspartyl-tRNA(Asx) + AMP + diphosphate. Functionally, aspartyl-tRNA synthetase with relaxed tRNA specificity since it is able to aspartylate not only its cognate tRNA(Asp) but also tRNA(Asn). Reaction proceeds in two steps: L-aspartate is first activated by ATP to form Asp-AMP and then transferred to the acceptor end of tRNA(Asp/Asn). This chain is Aspartate--tRNA(Asp/Asn) ligase, found in Rhodopseudomonas palustris (strain BisA53).